Here is a 324-residue protein sequence, read N- to C-terminus: NADH-ubiquinone oxidoreductase chain 1 (324 aa).

8 consecutive transmembrane segments (helical) span residues 9 to 29 (LINPLAYIVPVLLAVAFLTLI), 75 to 95 (FLFLAAPVLALTLAMTLWAPM), 106 to 126 (LGILFILALSSLAVYSILGSG), 146 to 166 (ISYEVSLGLILLSVIIFSGGY), 177 to 197 (SIWLLIPAWPLAAMWYISTLA), 228 to 248 (LFFLAEYANILLMNTLSAVLF), 259 to 279 (ELTTINLMTKAALLSIMFLWV), and 299 to 319 (FLPLTLAFVLWHTALPIALAG).

This sequence belongs to the complex I subunit 1 family.

The protein resides in the mitochondrion inner membrane. It catalyses the reaction a ubiquinone + NADH + 5 H(+)(in) = a ubiquinol + NAD(+) + 4 H(+)(out). Functionally, core subunit of the mitochondrial membrane respiratory chain NADH dehydrogenase (Complex I) that is believed to belong to the minimal assembly required for catalysis. Complex I functions in the transfer of electrons from NADH to the respiratory chain. The immediate electron acceptor for the enzyme is believed to be ubiquinone. The polypeptide is NADH-ubiquinone oxidoreductase chain 1 (MT-ND1) (Cyprinus carpio (Common carp)).